Reading from the N-terminus, the 129-residue chain is uncharacterized protein (129 aa).

This is an uncharacterized protein from Mycoplasma genitalium (strain ATCC 33530 / DSM 19775 / NCTC 10195 / G37) (Mycoplasmoides genitalium).